The sequence spans 495 residues: Probable cytochrome P450 4s3 (495 aa).

Heme-binding residues include Glu-307 and Cys-436.

This sequence belongs to the cytochrome P450 family. Heme is required as a cofactor.

It is found in the endoplasmic reticulum membrane. Its subcellular location is the microsome membrane. In terms of biological role, may be involved in the metabolism of insect hormones and in the breakdown of synthetic insecticides. The protein is Probable cytochrome P450 4s3 (Cyp4s3) of Drosophila melanogaster (Fruit fly).